The sequence spans 694 residues: Elongation factor G (694 aa).

A tr-type G domain is found at 8 to 282; sequence DRLRNIGIMA…AIVDYLPSPL (275 aa). Residues 17–24, 81–85, and 135–138 each bind GTP; these read AHIDAGKT, DTPGH, and NKMD. The tract at residues 284 to 303 is disordered; it reads IPPVQGTDPETGEPAERKAD.

This sequence belongs to the TRAFAC class translation factor GTPase superfamily. Classic translation factor GTPase family. EF-G/EF-2 subfamily.

The protein resides in the cytoplasm. In terms of biological role, catalyzes the GTP-dependent ribosomal translocation step during translation elongation. During this step, the ribosome changes from the pre-translocational (PRE) to the post-translocational (POST) state as the newly formed A-site-bound peptidyl-tRNA and P-site-bound deacylated tRNA move to the P and E sites, respectively. Catalyzes the coordinated movement of the two tRNA molecules, the mRNA and conformational changes in the ribosome. The protein is Elongation factor G of Symbiobacterium thermophilum (strain DSM 24528 / JCM 14929 / IAM 14863 / T).